We begin with the raw amino-acid sequence, 73 residues long: Hypotensin-like peptide (73 aa).

A signal peptide spans 1 to 25 (MKMMIAIVFVSILLLMFSLSSTAMG).

In terms of tissue distribution, expressed by the venom gland.

It localises to the secreted. Its function is as follows. May potentiate the hypotensive effect of bradykinin. In Tityus serrulatus (Brazilian scorpion), this protein is Hypotensin-like peptide.